Reading from the N-terminus, the 415-residue chain is Probable glucuronosyltransferase Os01g0926600 (415 aa).

The Cytoplasmic segment spans residues 1 to 4 (MAMR). The helical; Signal-anchor for type II membrane protein transmembrane segment at 5–25 (LSSAAVALALLLAATALEDVA) threads the bilayer. The Lumenal portion of the chain corresponds to 26 to 415 (RGQDTERIEG…QGPVGDLKPW (390 aa)). 2 N-linked (GlcNAc...) asparagine glycosylation sites follow: Asn142 and Asn403.

Belongs to the glycosyltransferase 47 family.

The protein localises to the golgi apparatus membrane. In terms of biological role, involved in the synthesis of glucuronoxylan hemicellulose in secondary cell walls. In Oryza sativa subsp. japonica (Rice), this protein is Probable glucuronosyltransferase Os01g0926600.